Consider the following 136-residue polypeptide: Large ribosomal subunit protein uL16 (136 aa).

The protein belongs to the universal ribosomal protein uL16 family. In terms of assembly, part of the 50S ribosomal subunit.

Its function is as follows. Binds 23S rRNA and is also seen to make contacts with the A and possibly P site tRNAs. The protein is Large ribosomal subunit protein uL16 of Buchnera aphidicola subsp. Baizongia pistaciae (strain Bp).